We begin with the raw amino-acid sequence, 247 residues long: Isoprenyl transferase (247 aa).

Residue Asp18 is part of the active site. Asp18 contributes to the Mg(2+) binding site. Residues 19-22 (GNGR), Trp23, Arg31, His35, and 63-65 (SSE) each bind substrate. The Proton acceptor role is filled by Asn66. Substrate-binding positions include Trp67, Arg69, Arg186, and 192-194 (RLS). Residue Glu205 participates in Mg(2+) binding.

This sequence belongs to the UPP synthase family. Homodimer. The cofactor is Mg(2+).

Functionally, catalyzes the condensation of isopentenyl diphosphate (IPP) with allylic pyrophosphates generating different type of terpenoids. This Rhizobium meliloti (strain 1021) (Ensifer meliloti) protein is Isoprenyl transferase.